The primary structure comprises 320 residues: Ribosome production factor 2 homolog (320 aa).

In terms of domain architecture, Brix spans 30-234 (RTMLFLDGRK…IRRTKIASED (205 aa)). The segment at 268 to 320 (LGKQQTGSIQTRRVKALRKTPEEKKENRQRKKVALKAAAAEALASQGNNPFSS) is disordered. Low complexity predominate over residues 302 to 311 (LKAAAAEALA).

It belongs to the RPF2 family.

It is found in the nucleus. The protein resides in the nucleolus. Functionally, required for normal assembly of the mitotic spindle. May be involved in both centrosome-dependent and centrosome-independent spindle assembly programs. In Drosophila melanogaster (Fruit fly), this protein is Ribosome production factor 2 homolog.